A 388-amino-acid chain; its full sequence is Histone H2A.Y (388 aa).

LRR repeat units lie at residues 54-75, 76-96, and 100-121; these read SLQM…PHVP, SLIR…QYLR, and HLQT…KRLG. The LRRCT domain occupies 134-172; it reads NPVVNTNNYRNLVFNLFPSLVILDTLDKNGIDQEKAALD. Residues 256–279 form a disordered region; the sequence is RKAPASRNGGVPSKAGKGKMNAFS.

The protein belongs to the histone H2A family. As to quaternary structure, the nucleosome is a histone octamer containing two molecules each of H2A, H2B, H3 and H4 assembled in one H3-H4 heterotetramer and two H2A-H2B heterodimers. The octamer wraps approximately 147 bp of DNA.

Its subcellular location is the nucleus. It localises to the chromosome. Functionally, variant histone H2A which replaces conventional H2A in a subset of nucleosomes. Nucleosomes wrap and compact DNA into chromatin, limiting DNA accessibility to the cellular machineries which require DNA as a template. Histones thereby play a central role in transcription regulation, DNA repair, DNA replication and chromosomal stability. DNA accessibility is regulated via a complex set of post-translational modifications of histones, also called histone code, and nucleosome remodeling. In Tetrahymena thermophila (strain SB210), this protein is Histone H2A.Y (HTAY).